Reading from the N-terminus, the 501-residue chain is Glycerol kinase (501 aa).

Thr12 lines the ADP pocket. ATP is bound by residues Thr12, Thr13, and Ser14. Thr12 is a binding site for sn-glycerol 3-phosphate. An ADP-binding site is contributed by Arg16. Residues Arg82, Glu83, Tyr135, and Asp244 each contribute to the sn-glycerol 3-phosphate site. Glycerol is bound by residues Arg82, Glu83, Tyr135, Asp244, and Gln245. ADP-binding residues include Thr266, Gly309, Gly409, and Asn413. ATP contacts are provided by Thr266, Gly309, and Gly409.

The protein belongs to the FGGY kinase family.

The enzyme catalyses glycerol + ATP = sn-glycerol 3-phosphate + ADP + H(+). Its pathway is polyol metabolism; glycerol degradation via glycerol kinase pathway; sn-glycerol 3-phosphate from glycerol: step 1/1. With respect to regulation, inhibited by fructose 1,6-bisphosphate (FBP). Its function is as follows. Key enzyme in the regulation of glycerol uptake and metabolism. Catalyzes the phosphorylation of glycerol to yield sn-glycerol 3-phosphate. The polypeptide is Glycerol kinase (Coxiella burnetii (strain Dugway 5J108-111)).